Consider the following 568-residue polypeptide: Phenylalanine--tRNA ligase beta subunit (568 aa).

Residues 278 to 353 (LTPKSFEVEL…IAYGYNEIEP (76 aa)) form the B5 domain. Mg(2+)-binding residues include aspartate 331, aspartate 337, glutamate 340, and aspartate 341.

This sequence belongs to the phenylalanyl-tRNA synthetase beta subunit family. Type 2 subfamily. In terms of assembly, tetramer of two alpha and two beta subunits. Mg(2+) is required as a cofactor.

It localises to the cytoplasm. The catalysed reaction is tRNA(Phe) + L-phenylalanine + ATP = L-phenylalanyl-tRNA(Phe) + AMP + diphosphate + H(+). This Thermococcus gammatolerans (strain DSM 15229 / JCM 11827 / EJ3) protein is Phenylalanine--tRNA ligase beta subunit.